A 251-amino-acid polypeptide reads, in one-letter code: Derlin-1 (251 aa).

Ser2 bears the N-acetylserine mark. Over 2–15 (SDIGDWFRSIPAIT) the chain is Cytoplasmic. Residues 16–31 (RYWFAATVAVPLVGKL) form a helical membrane-spanning segment. Residues 32 to 69 (GLISPAYLFLWPEAFLYRFQIWRPITATFYFPVGPGTG) lie on the Lumenal side of the membrane. Residues 70–89 (FLYLVNLYFLYHYSTRLETG) form a helical membrane-spanning segment. At 90-94 (AFDGR) the chain is on the cytoplasmic side. The helical transmembrane segment at 95 to 115 (PADYLFMLLFNWICIVITGLA) threads the bilayer. The Lumenal segment spans residues 116-122 (MDMQLLM). The chain crosses the membrane as a helical span at residues 123–137 (IPLIMSVLYVWAQLN). The Cytoplasmic segment spans residues 138 to 154 (RDMIVSFWFGTRFKACY). Residues 155–166 (LPWVILGFNYII) traverse the membrane as a helical segment. Over 167-170 (GGSV) the chain is Lumenal. Residues 171 to 189 (INELIGNLVGHLYFFLMFR) traverse the membrane as a helical segment. Residues 190 to 251 (YPMDLGGRNF…WGQGFRLGDQ (62 aa)) lie on the Cytoplasmic side of the membrane. A Phosphoserine modification is found at Ser201. The residue at position 202 (Thr202) is a Phosphothreonine. Ser226 carries the post-translational modification Phosphoserine. Residues 229-251 (RAADQNGGGGRHNWGQGFRLGDQ) form a disordered region. Residues 241–248 (NWGQGFRL) carry the SHP-box motif.

The protein belongs to the derlin family. Homotetramer. The four subunits of the tetramer are arranged in a twofold symmetry. Forms homo- and heterooligomers with DERL2 and DERL3; binding to DERL3 is poorer than that between DERL2 and DERL3. Interacts (via SHP-box motif) with VCP. Interacts with AMFR, SELENOS, SEL1L, SELENOK and SYVN1, as well as with SEL1L-SYVN1 and VCP-SELENOS protein complexes; this interaction is weaker than that observed between DERL2 and these complexes. Interacts with NGLY1 and YOD1. Does not bind to EDEM1. Interacts with DNAJB9. Interacts with RNF103. Interacts with HM13. Interacts with XBP1 isoform 1 (via luminal/ectodomain domain); the interaction obviates the need for ectodomain shedding prior HM13/SPP-mediated XBP1 isoform 1 cleavage. Interacts with the signal recognition particle/SRP and the SRP receptor; in the process of endoplasmic reticulum stress-induced pre-emptive quality control. May interact with UBXN6. Interacts with ZFAND2B; probably through VCP. Interacts with CCDC47. Interacts with C18orf32. May interact with TRAM1. Forms a complex with SVIP and VCP/p97.

Its subcellular location is the endoplasmic reticulum membrane. In terms of biological role, functional component of endoplasmic reticulum-associated degradation (ERAD) for misfolded lumenal proteins. Forms homotetramers which encircle a large channel traversing the endoplasmic reticulum (ER) membrane. This allows the retrotranslocation of misfolded proteins from the ER into the cytosol where they are ubiquitinated and degraded by the proteasome. The channel has a lateral gate within the membrane which provides direct access to membrane proteins with no need to reenter the ER lumen first. May mediate the interaction between VCP and the misfolded protein. Also involved in endoplasmic reticulum stress-induced pre-emptive quality control, a mechanism that selectively attenuates the translocation of newly synthesized proteins into the endoplasmic reticulum and reroutes them to the cytosol for proteasomal degradation. By controlling the steady-state expression of the IGF1R receptor, indirectly regulates the insulin-like growth factor receptor signaling pathway. In Pongo abelii (Sumatran orangutan), this protein is Derlin-1.